Consider the following 202-residue polypeptide: Zinc metalloproteinase barnettlysin-1 (202 aa).

Residues 6 to 200 (RYVELFIVVD…MKENPQCILN (195 aa)) enclose the Peptidase M12B domain. Residues glutamate 9 and aspartate 93 each contribute to the Ca(2+) site. Cystine bridges form between cysteine 117–cysteine 197, cysteine 157–cysteine 181, and cysteine 159–cysteine 164. Histidine 142 is a Zn(2+) binding site. The active site involves glutamate 143. Residues histidine 146 and histidine 152 each coordinate Zn(2+). Ca(2+)-binding residues include cysteine 197 and asparagine 200.

In terms of assembly, monomer. Zn(2+) serves as cofactor. As to expression, expressed by the venom gland.

It localises to the secreted. Its function is as follows. Non-hemorrhagic metalloproteinase that hydrolyzes the alpha chains of fibrinogen and fibrin but has no activity on beta- and gamma-chains. Cleaves X-Leu bonds. Inhibits platelet aggregation induced by the von Willebrand factor (VWF) (IC(50) is 1.4 uM) and type I collagen (IC(50) is 3.2 uM). Acts by cleaving the vWF and its receptor GPIb, and by cleaving the collagen-binding Alpha-2A domain of the collagen receptor alpha-2/beta-1 integrin (ITGA2/ITGB1). Also degrades the extracellular matrix protein fibronectin (FN1), but has no effect on laminin and type I collagen. The sequence is that of Zinc metalloproteinase barnettlysin-1 from Bothrops barnetti (Barnett's lancehead).